We begin with the raw amino-acid sequence, 368 residues long: Phospho-N-acetylmuramoyl-pentapeptide-transferase (368 aa).

The next 9 helical transmembrane spans lie at 2 to 22, 51 to 71, 80 to 100, 117 to 137, 167 to 187, 193 to 213, 234 to 254, 271 to 291, and 340 to 360; these read IALI…TPLL, TLGG…SALY, PSWS…LGFI, GGKF…ALLI, VAII…TNAV, LDGL…IIAF, PLDL…FLWY, LGGL…AVVL, and FWMI…GDWV.

Belongs to the glycosyltransferase 4 family. MraY subfamily. The cofactor is Mg(2+).

The protein localises to the cell membrane. The enzyme catalyses UDP-N-acetyl-alpha-D-muramoyl-L-alanyl-gamma-D-glutamyl-meso-2,6-diaminopimeloyl-D-alanyl-D-alanine + di-trans,octa-cis-undecaprenyl phosphate = di-trans,octa-cis-undecaprenyl diphospho-N-acetyl-alpha-D-muramoyl-L-alanyl-D-glutamyl-meso-2,6-diaminopimeloyl-D-alanyl-D-alanine + UMP. Its pathway is cell wall biogenesis; peptidoglycan biosynthesis. In terms of biological role, catalyzes the initial step of the lipid cycle reactions in the biosynthesis of the cell wall peptidoglycan: transfers peptidoglycan precursor phospho-MurNAc-pentapeptide from UDP-MurNAc-pentapeptide onto the lipid carrier undecaprenyl phosphate, yielding undecaprenyl-pyrophosphoryl-MurNAc-pentapeptide, known as lipid I. This is Phospho-N-acetylmuramoyl-pentapeptide-transferase from Bifidobacterium longum (strain DJO10A).